Here is a 451-residue protein sequence, read N- to C-terminus: 3-carboxy-cis,cis-muconate cycloisomerase (451 aa).

Belongs to the class-II fumarase/aspartase family.

It carries out the reaction 2-(carboxymethyl)-5-oxo-2,5-dihydro-2-furoate = 3-carboxy-cis,cis-muconate + H(+). Its function is as follows. Catalyzes an anti cycloisomerization. This is 3-carboxy-cis,cis-muconate cycloisomerase (pcaB) from Bradyrhizobium diazoefficiens (strain JCM 10833 / BCRC 13528 / IAM 13628 / NBRC 14792 / USDA 110).